The following is a 90-amino-acid chain: Trp-8 progonadoliberin (90 aa).

Residues 1–24 form the signal peptide; it reads MSRHVTVVLLLAVVLLLSSHMSHG. Gln25 bears the Pyrrolidone carboxylic acid mark. Gly34 bears the Glycine amide mark.

This sequence belongs to the GnRH family. Expressed in forebrain but not in testis, ovary, kidney and liver.

Its subcellular location is the secreted. Functionally, stimulates the secretion of gonadotropins. This is Trp-8 progonadoliberin from Rana dybowskii (Dybovsky's frog).